The sequence spans 89 residues: Small ribosomal subunit protein uS15 (89 aa).

The protein belongs to the universal ribosomal protein uS15 family. In terms of assembly, part of the 30S ribosomal subunit. Forms a bridge to the 50S subunit in the 70S ribosome, contacting the 23S rRNA.

Functionally, one of the primary rRNA binding proteins, it binds directly to 16S rRNA where it helps nucleate assembly of the platform of the 30S subunit by binding and bridging several RNA helices of the 16S rRNA. In terms of biological role, forms an intersubunit bridge (bridge B4) with the 23S rRNA of the 50S subunit in the ribosome. In Granulibacter bethesdensis (strain ATCC BAA-1260 / CGDNIH1), this protein is Small ribosomal subunit protein uS15.